Reading from the N-terminus, the 368-residue chain is V-type proton ATPase subunit C (368 aa).

It belongs to the V-ATPase C subunit family. V-ATPase is a heteromultimeric enzyme composed of a peripheral catalytic V1 complex (components A to H) attached to an integral membrane V0 proton pore complex (components: a, c, c', c'' and d).

Its function is as follows. Subunit of the peripheral V1 complex of vacuolar ATPase. Subunit C is necessary for the assembly of the catalytic sector of the enzyme and is likely to have a specific function in its catalytic activity. V-ATPase is responsible for acidifying a variety of intracellular compartments in eukaryotic cells. The chain is V-type proton ATPase subunit C (vatC) from Dictyostelium discoideum (Social amoeba).